The primary structure comprises 329 residues: 2,3,4,5-tetrahydropyridine-2,6-dicarboxylate N-succinyltransferase (329 aa).

D177 and E194 together coordinate Mg(2+). The active-site Acyl-anhydride intermediate is E210. Residues R212, G227, S230, A253, 268 to 269 (EA), G276, K288, and 301 to 304 (RRNS) each bind succinyl-CoA.

This sequence belongs to the type 2 tetrahydrodipicolinate N-succinyltransferase family. Homotrimer.

Its subcellular location is the cytoplasm. It carries out the reaction (S)-2,3,4,5-tetrahydrodipicolinate + succinyl-CoA + H2O = (S)-2-succinylamino-6-oxoheptanedioate + CoA. The protein operates within amino-acid biosynthesis; L-lysine biosynthesis via DAP pathway; LL-2,6-diaminopimelate from (S)-tetrahydrodipicolinate (succinylase route): step 1/3. Functionally, catalyzes the conversion of the cyclic tetrahydrodipicolinate (THDP) into the acyclic N-succinyl-L-2-amino-6-oxopimelate using succinyl-CoA. This chain is 2,3,4,5-tetrahydropyridine-2,6-dicarboxylate N-succinyltransferase, found in Streptomyces coelicolor (strain ATCC BAA-471 / A3(2) / M145).